We begin with the raw amino-acid sequence, 166 residues long: Endoribonuclease YbeY (166 aa).

Positions 132, 136, and 142 each coordinate Zn(2+).

Belongs to the endoribonuclease YbeY family. It depends on Zn(2+) as a cofactor.

The protein localises to the cytoplasm. In terms of biological role, single strand-specific metallo-endoribonuclease involved in late-stage 70S ribosome quality control and in maturation of the 3' terminus of the 16S rRNA. The chain is Endoribonuclease YbeY from Clostridium botulinum (strain Langeland / NCTC 10281 / Type F).